The primary structure comprises 361 residues: Probable dual-specificity RNA methyltransferase RlmN (361 aa).

Residue glutamate 91 is the Proton acceptor of the active site. The Radical SAM core domain occupies 97–329 (QHYGLSVCVT…KKKGGNCVVR (233 aa)). An intrachain disulfide couples cysteine 104 to cysteine 340. [4Fe-4S] cluster contacts are provided by cysteine 111, cysteine 115, and cysteine 118. Residues 163-164 (GE), serine 195, 218-220 (SLH), and asparagine 296 contribute to the S-adenosyl-L-methionine site. Cysteine 340 acts as the S-methylcysteine intermediate in catalysis.

This sequence belongs to the radical SAM superfamily. RlmN family. The cofactor is [4Fe-4S] cluster.

Its subcellular location is the cytoplasm. It catalyses the reaction adenosine(2503) in 23S rRNA + 2 reduced [2Fe-2S]-[ferredoxin] + 2 S-adenosyl-L-methionine = 2-methyladenosine(2503) in 23S rRNA + 5'-deoxyadenosine + L-methionine + 2 oxidized [2Fe-2S]-[ferredoxin] + S-adenosyl-L-homocysteine. The catalysed reaction is adenosine(37) in tRNA + 2 reduced [2Fe-2S]-[ferredoxin] + 2 S-adenosyl-L-methionine = 2-methyladenosine(37) in tRNA + 5'-deoxyadenosine + L-methionine + 2 oxidized [2Fe-2S]-[ferredoxin] + S-adenosyl-L-homocysteine. Its function is as follows. Specifically methylates position 2 of adenine 2503 in 23S rRNA and position 2 of adenine 37 in tRNAs. The sequence is that of Probable dual-specificity RNA methyltransferase RlmN from Streptococcus pneumoniae serotype 2 (strain D39 / NCTC 7466).